The sequence spans 226 residues: UPF0758 protein SE_1336 (226 aa).

Residues 102-224 (QITHPSDVAS…FTSLVEAGYF (123 aa)) form the MPN domain. Zn(2+) contacts are provided by His-173, His-175, and Asp-186. The short motif at 173–186 (HNHPSGDVTPSKED) is the JAMM motif element.

The protein belongs to the UPF0758 family.

This Staphylococcus epidermidis (strain ATCC 12228 / FDA PCI 1200) protein is UPF0758 protein SE_1336.